Here is a 386-residue protein sequence, read N- to C-terminus: 4-hydroxy-3-methylbut-2-en-1-yl diphosphate synthase (flavodoxin) (386 aa).

The [4Fe-4S] cluster site is built by C289, C292, C324, and E331.

Belongs to the IspG family. [4Fe-4S] cluster serves as cofactor.

It catalyses the reaction (2E)-4-hydroxy-3-methylbut-2-enyl diphosphate + oxidized [flavodoxin] + H2O + 2 H(+) = 2-C-methyl-D-erythritol 2,4-cyclic diphosphate + reduced [flavodoxin]. It functions in the pathway isoprenoid biosynthesis; isopentenyl diphosphate biosynthesis via DXP pathway; isopentenyl diphosphate from 1-deoxy-D-xylulose 5-phosphate: step 5/6. Converts 2C-methyl-D-erythritol 2,4-cyclodiphosphate (ME-2,4cPP) into 1-hydroxy-2-methyl-2-(E)-butenyl 4-diphosphate. This Nitratidesulfovibrio vulgaris (strain ATCC 29579 / DSM 644 / CCUG 34227 / NCIMB 8303 / VKM B-1760 / Hildenborough) (Desulfovibrio vulgaris) protein is 4-hydroxy-3-methylbut-2-en-1-yl diphosphate synthase (flavodoxin).